Reading from the N-terminus, the 128-residue chain is 3-aminoacrylate deaminase RutC (128 aa).

Belongs to the RutC family.

The catalysed reaction is (Z)-3-aminoacrylate + H2O + H(+) = 3-oxopropanoate + NH4(+). In terms of biological role, involved in pyrimidine catabolism. Catalyzes the deamination of 3-aminoacrylate to malonic semialdehyde, a reaction that can also occur spontaneously. RutC may facilitate the reaction and modulate the metabolic fitness, rather than catalyzing essential functions. The sequence is that of 3-aminoacrylate deaminase RutC from Enterobacter cloacae subsp. cloacae (strain ATCC 13047 / DSM 30054 / NBRC 13535 / NCTC 10005 / WDCM 00083 / NCDC 279-56).